A 586-amino-acid chain; its full sequence is Frizzled-10-A (586 aa).

Residues 1 to 26 (MDVSGVTGLLRGTALLLVLAAALCSA) form the signal peptide. Residues 27–230 (ISSINPDRSG…DVYWSKDDKK (204 aa)) lie on the Extracellular side of the membrane. The FZ domain maps to 35 to 156 (SGDGRCQAIE…NDPNYLCMEA (122 aa)). 5 disulfide bridges follow: Cys40–Cys101, Cys48–Cys94, Cys85–Cys123, Cys112–Cys153, and Cys116–Cys140. An N-linked (GlcNAc...) asparagine glycan is attached at Asn54. An N-linked (GlcNAc...) asparagine glycan is attached at Asn159. Positions 161–199 (TDETPRGSSMLPPIFRPQRPSSGHEIYPKDPTSRSSCEN) are disordered. A helical transmembrane segment spans residues 231-251 (FAFIWIAIWSILCFFSSAFTV). Topologically, residues 252–267 (LTFLVDPLRFKYPERP) are cytoplasmic. Residues 268–288 (IIFLSMCYCVYSVGYIIRLFA) traverse the membrane as a helical segment. The Extracellular portion of the chain corresponds to 289–315 (GADSIACDRDSGQLYVIQEGLESTGCT). A helical membrane pass occupies residues 316–336 (IVFLILYYFGMASSLWWVILT). Residues 337-356 (LTWFLAAGKKWGHEAIEANS) are Cytoplasmic-facing. The chain crosses the membrane as a helical span at residues 357–377 (SYFHLAAWAIPAVKTIMILVM). At 378–401 (RRVAGDELTGVCYVGSMDVNALTG) the chain is on the extracellular side. A helical membrane pass occupies residues 402-422 (FVLIPLACYLIIGTSFILSGF). Over 423–448 (VALFHIRRVMKTGGENTDKLEKLMVR) the chain is Cytoplasmic. Residues 449–469 (IGVFSVLYTVPATCVIACYFY) traverse the membrane as a helical segment. Residues 470-507 (ERLNMDFWKILATQDKCKMDSQTKTLDCTMTSSIPAVE) are Extracellular-facing. The chain crosses the membrane as a helical span at residues 508–528 (IFMVKIFMLLVVGITSGMWIW). The Cytoplasmic portion of the chain corresponds to 529–586 (TSKTVQSWQNVFSKRLKKRNRSKPASVITSAGIYKKPQHPPKVHHGKYESALQSPTCV). Positions 531–536 (KTVQSW) match the Lys-Thr-X-X-X-Trp motif, mediates interaction with the PDZ domain of Dvl family members motif. Residues 563–586 (KKPQHPPKVHHGKYESALQSPTCV) form a disordered region. Residues 564-573 (KPQHPPKVHH) show a composition bias toward basic residues. The short motif at 584–586 (TCV) is the PDZ-binding element.

Belongs to the G-protein coupled receptor Fz/Smo family. As to expression, expressed in liver, lung, brain, testis, stomach, kidney, eye, skeletal muscle and skin.

The protein localises to the cell membrane. Receptor for Wnt proteins. Most of frizzled receptors are coupled to the beta-catenin canonical signaling pathway, which leads to the activation of disheveled proteins, inhibition of GSK-3 kinase, nuclear accumulation of beta-catenin and activation of Wnt target genes. A second signaling pathway involving PKC and calcium fluxes has been seen for some family members, but it is not yet clear if it represents a distinct pathway or if it can be integrated in the canonical pathway, as PKC seems to be required for Wnt-mediated inactivation of GSK-3 kinase. Both pathways seem to involve interactions with G-proteins. May be involved in transduction and intercellular transmission of polarity information during tissue morphogenesis and/or in differentiated tissues. Activated by Wnt8. Could have an antagonizing activity in the morphogenesis during development. This chain is Frizzled-10-A (fzd10-a), found in Xenopus laevis (African clawed frog).